We begin with the raw amino-acid sequence, 322 residues long: Transaldolase (322 aa).

Residue K132 is the Schiff-base intermediate with substrate of the active site. A phosphoserine mark is found at S268 and S269.

It belongs to the transaldolase family. Type 1 subfamily. As to quaternary structure, homodimer.

The enzyme catalyses D-sedoheptulose 7-phosphate + D-glyceraldehyde 3-phosphate = D-erythrose 4-phosphate + beta-D-fructose 6-phosphate. The protein operates within carbohydrate degradation; pentose phosphate pathway; D-glyceraldehyde 3-phosphate and beta-D-fructose 6-phosphate from D-ribose 5-phosphate and D-xylulose 5-phosphate (non-oxidative stage): step 2/3. Functionally, transaldolase is important for the balance of metabolites in the pentose-phosphate pathway. This chain is Transaldolase (tal1), found in Schizosaccharomyces pombe (strain 972 / ATCC 24843) (Fission yeast).